Reading from the N-terminus, the 185-residue chain is Ribosome-recycling factor (185 aa).

This sequence belongs to the RRF family.

The protein resides in the cytoplasm. Its function is as follows. Responsible for the release of ribosomes from messenger RNA at the termination of protein biosynthesis. May increase the efficiency of translation by recycling ribosomes from one round of translation to another. The protein is Ribosome-recycling factor of Streptococcus mutans serotype c (strain ATCC 700610 / UA159).